Consider the following 211-residue polypeptide: Ribosomal RNA large subunit methyltransferase E (211 aa).

S-adenosyl-L-methionine-binding residues include G60, W62, D85, D101, and D126. The active-site Proton acceptor is K166.

The protein belongs to the class I-like SAM-binding methyltransferase superfamily. RNA methyltransferase RlmE family.

It is found in the cytoplasm. It carries out the reaction uridine(2552) in 23S rRNA + S-adenosyl-L-methionine = 2'-O-methyluridine(2552) in 23S rRNA + S-adenosyl-L-homocysteine + H(+). Functionally, specifically methylates the uridine in position 2552 of 23S rRNA at the 2'-O position of the ribose in the fully assembled 50S ribosomal subunit. This chain is Ribosomal RNA large subunit methyltransferase E, found in Bordetella petrii (strain ATCC BAA-461 / DSM 12804 / CCUG 43448).